Here is a 347-residue protein sequence, read N- to C-terminus: Protein RecA (347 aa).

ATP is bound at residue 67-74; that stretch reads GPESSGKT.

The protein belongs to the RecA family.

It is found in the cytoplasm. Its function is as follows. Can catalyze the hydrolysis of ATP in the presence of single-stranded DNA, the ATP-dependent uptake of single-stranded DNA by duplex DNA, and the ATP-dependent hybridization of homologous single-stranded DNAs. It interacts with LexA causing its activation and leading to its autocatalytic cleavage. The polypeptide is Protein RecA (Helicobacter pylori (strain HPAG1)).